The sequence spans 418 residues: Serine hydroxymethyltransferase (418 aa).

Residues Leu121 and Gly125–Leu127 each bind (6S)-5,6,7,8-tetrahydrofolate. The residue at position 230 (Lys230) is an N6-(pyridoxal phosphate)lysine. Residue Ser355 to Phe357 coordinates (6S)-5,6,7,8-tetrahydrofolate.

The protein belongs to the SHMT family. As to quaternary structure, homodimer. Requires pyridoxal 5'-phosphate as cofactor.

It is found in the cytoplasm. It catalyses the reaction (6R)-5,10-methylene-5,6,7,8-tetrahydrofolate + glycine + H2O = (6S)-5,6,7,8-tetrahydrofolate + L-serine. The protein operates within one-carbon metabolism; tetrahydrofolate interconversion. It participates in amino-acid biosynthesis; glycine biosynthesis; glycine from L-serine: step 1/1. Functionally, catalyzes the reversible interconversion of serine and glycine with tetrahydrofolate (THF) serving as the one-carbon carrier. This reaction serves as the major source of one-carbon groups required for the biosynthesis of purines, thymidylate, methionine, and other important biomolecules. Also exhibits THF-independent aldolase activity toward beta-hydroxyamino acids, producing glycine and aldehydes, via a retro-aldol mechanism. The protein is Serine hydroxymethyltransferase of Streptococcus pyogenes serotype M18 (strain MGAS8232).